Reading from the N-terminus, the 304-residue chain is tRNA pseudouridine synthase B (304 aa).

The active-site Nucleophile is aspartate 38.

The protein belongs to the pseudouridine synthase TruB family. Type 1 subfamily.

It carries out the reaction uridine(55) in tRNA = pseudouridine(55) in tRNA. Functionally, responsible for synthesis of pseudouridine from uracil-55 in the psi GC loop of transfer RNAs. This chain is tRNA pseudouridine synthase B, found in Listeria welshimeri serovar 6b (strain ATCC 35897 / DSM 20650 / CCUG 15529 / CIP 8149 / NCTC 11857 / SLCC 5334 / V8).